A 91-amino-acid chain; its full sequence is Defensin-like protein 82 (91 aa).

The signal sequence occupies residues 1–27 (MAIKKFSSLLLPLLMVLALVVLPIISG). 4 disulfides stabilise this stretch: Cys34–Cys72, Cys41–Cys62, Cys47–Cys70, and Cys51–Cys71.

This sequence belongs to the DEFL family.

The protein resides in the secreted. The polypeptide is Defensin-like protein 82 (Arabidopsis thaliana (Mouse-ear cress)).